Reading from the N-terminus, the 90-residue chain is DNA-directed RNA polymerase subunit omega (90 aa).

The disordered stretch occupies residues 69–90 (RQEQQEQEAAELAAVSSIAHNR).

This sequence belongs to the RNA polymerase subunit omega family. As to quaternary structure, the RNAP catalytic core consists of 2 alpha, 1 beta, 1 beta' and 1 omega subunit. When a sigma factor is associated with the core the holoenzyme is formed, which can initiate transcription.

The enzyme catalyses RNA(n) + a ribonucleoside 5'-triphosphate = RNA(n+1) + diphosphate. Promotes RNA polymerase assembly. Latches the N- and C-terminal regions of the beta' subunit thereby facilitating its interaction with the beta and alpha subunits. This chain is DNA-directed RNA polymerase subunit omega, found in Vibrio parahaemolyticus serotype O3:K6 (strain RIMD 2210633).